The chain runs to 264 residues: Thymidylate synthase (264 aa).

Arginine 21 provides a ligand contact to dUMP. Residue histidine 51 participates in (6R)-5,10-methylene-5,6,7,8-tetrahydrofolate binding. 126–127 (RR) lines the dUMP pocket. Residue cysteine 146 is the Nucleophile of the active site. Residues 166–169 (RSGD), asparagine 177, and 207–209 (HIY) contribute to the dUMP site. Aspartate 169 contacts (6R)-5,10-methylene-5,6,7,8-tetrahydrofolate. Alanine 263 provides a ligand contact to (6R)-5,10-methylene-5,6,7,8-tetrahydrofolate.

Belongs to the thymidylate synthase family. Bacterial-type ThyA subfamily. In terms of assembly, homodimer.

It localises to the cytoplasm. The catalysed reaction is dUMP + (6R)-5,10-methylene-5,6,7,8-tetrahydrofolate = 7,8-dihydrofolate + dTMP. The protein operates within pyrimidine metabolism; dTTP biosynthesis. Functionally, catalyzes the reductive methylation of 2'-deoxyuridine-5'-monophosphate (dUMP) to 2'-deoxythymidine-5'-monophosphate (dTMP) while utilizing 5,10-methylenetetrahydrofolate (mTHF) as the methyl donor and reductant in the reaction, yielding dihydrofolate (DHF) as a by-product. This enzymatic reaction provides an intracellular de novo source of dTMP, an essential precursor for DNA biosynthesis. The sequence is that of Thymidylate synthase from Sinorhizobium medicae (strain WSM419) (Ensifer medicae).